We begin with the raw amino-acid sequence, 211 residues long: Endonuclease Htp3 (211 aa).

Positions 1–20 (MLEVPVWIPILAFAVGLGLG) are cleaved as a signal peptide. The RxLR motif lies at 48–51 (RTLR). One can recognise a TNase-like domain in the interval 48 to 198 (RTLRGKVVSV…REKRVNIWSL (151 aa)). Asp77 provides a ligand contact to Ca(2+). The active site involves Arg90. Residue Asp95 participates in Ca(2+) binding. Catalysis depends on residues Glu98 and Arg138. The N-linked (GlcNAc...) asparagine glycan is linked to Asn153. Residues 200-211 (KRETPAQYKARK) are binding to the host cell surface.

In the N-terminal section; belongs to the RxLR effector family. It in the C-terminal section; belongs to the LCL3 family. In terms of assembly, interacts with the host cell surface endoplasmin gp96, in order to get translocated into to host cell. Interacts with the effector Htp1, in order to get released from vesicles into the host cytosol.

Its subcellular location is the secreted. It localises to the host cytoplasm. It is found in the host cytosol. The nuclease activity shows a general salt dependency with a clear reduction by magnesium and sulfate ions. Effector involved in the disease saprolegniosis in salmonids and other freshwater fish, resulting in considerable economic losses in aquaculture. Within the host fish cells, Htp3 is released from vesicles into host cytosol where it degrades nucleic acids. The sequence is that of Endonuclease Htp3 (HTP3) from Saprolegnia parasitica (strain CBS 223.65).